A 411-amino-acid polypeptide reads, in one-letter code: Anthranilate synthase component 1 (411 aa).

Residues Ser-27 and Pro-203–Met-205 contribute to the L-tryptophan site. Gly-237 to Thr-238 is a binding site for chorismate. Position 262 (Glu-262) interacts with Mg(2+). Chorismate is bound by residues Tyr-350, Arg-369, Gly-382–Gly-384, and Gly-384. Residue Glu-397 coordinates Mg(2+).

This sequence belongs to the anthranilate synthase component I family. In terms of assembly, heterotetramer consisting of two non-identical subunits: a beta subunit (TrpG) and a large alpha subunit (TrpE). It depends on Mg(2+) as a cofactor.

The catalysed reaction is chorismate + L-glutamine = anthranilate + pyruvate + L-glutamate + H(+). Its pathway is amino-acid biosynthesis; L-tryptophan biosynthesis; L-tryptophan from chorismate: step 1/5. With respect to regulation, feedback inhibited by tryptophan. In terms of biological role, part of a heterotetrameric complex that catalyzes the two-step biosynthesis of anthranilate, an intermediate in the biosynthesis of L-tryptophan. In the first step, the glutamine-binding beta subunit (TrpG) of anthranilate synthase (AS) provides the glutamine amidotransferase activity which generates ammonia as a substrate that, along with chorismate, is used in the second step, catalyzed by the large alpha subunit of AS (TrpE) to produce anthranilate. In the absence of TrpG, TrpE can synthesize anthranilate directly from chorismate and high concentrations of ammonia. This Archaeoglobus fulgidus (strain ATCC 49558 / DSM 4304 / JCM 9628 / NBRC 100126 / VC-16) protein is Anthranilate synthase component 1 (trpE).